The chain runs to 145 residues: Toxin Res (145 aa).

Belongs to the MbcT/ParT/Res family. As to quaternary structure, homodimer. Forms a complex with cognate antitoxin Xre; the 2 toxin molecules dimerize and each contacts an Xre homodimer. Most Res-Xre contacts are between the antitoxin molecule closest to the toxin.

Its function is as follows. Toxic component of a type II toxin-antitoxin (TA) system. Expression in E.coli inhibits cell growth. In vivo it is probably neutralized by cognate antitoxin Xre; this has not been shown upon expression in E.coli. Probably depletes intracellular NAD(+). This is Toxin Res from Pseudomonas putida (strain ATCC 47054 / DSM 6125 / CFBP 8728 / NCIMB 11950 / KT2440).